A 254-amino-acid chain; its full sequence is Sulfoacetaldehyde reductase (254 aa).

Position 8-32 (8-32 (FITGATSGFGEAAAQVFADAGWSLV)) interacts with NADP(+). Ser141 is a substrate binding site. Catalysis depends on Tyr154, which acts as the Proton acceptor.

This sequence belongs to the short-chain dehydrogenases/reductases (SDR) family. Homodimer and heterotetramer.

It catalyses the reaction 2-hydroxyethane-1-sulfonate + NADP(+) = sulfoacetaldehyde + NADPH + H(+). It participates in organosulfur degradation. Functionally, catalyzes the formation of isethionate from 2-sulfoacetaldehyde in the deaminative pathway of taurine. The enzyme is specific for NADPH; NADH is not a substrate. The chain is Sulfoacetaldehyde reductase (isfD) from Klebsiella oxytoca.